The primary structure comprises 236 residues: Small ribosomal subunit protein uS2c (236 aa).

This sequence belongs to the universal ribosomal protein uS2 family.

The protein localises to the plastid. Its subcellular location is the chloroplast. This is Small ribosomal subunit protein uS2c (rps2) from Ceratophyllum demersum (Rigid hornwort).